We begin with the raw amino-acid sequence, 343 residues long: Tetraacyldisaccharide 4'-kinase (343 aa).

47–54 contributes to the ATP binding site; the sequence is SVGGTGKT.

The protein belongs to the LpxK family.

The catalysed reaction is a lipid A disaccharide + ATP = a lipid IVA + ADP + H(+). The protein operates within glycolipid biosynthesis; lipid IV(A) biosynthesis; lipid IV(A) from (3R)-3-hydroxytetradecanoyl-[acyl-carrier-protein] and UDP-N-acetyl-alpha-D-glucosamine: step 6/6. Functionally, transfers the gamma-phosphate of ATP to the 4'-position of a tetraacyldisaccharide 1-phosphate intermediate (termed DS-1-P) to form tetraacyldisaccharide 1,4'-bis-phosphate (lipid IVA). The sequence is that of Tetraacyldisaccharide 4'-kinase from Flavobacterium psychrophilum (strain ATCC 49511 / DSM 21280 / CIP 103535 / JIP02/86).